Here is a 430-residue protein sequence, read N- to C-terminus: Enolase (430 aa).

Glutamine 167 is a binding site for (2R)-2-phosphoglycerate. The active-site Proton donor is the glutamate 209. Residues aspartate 246, glutamate 289, and aspartate 316 each contribute to the Mg(2+) site. Lysine 341, arginine 370, serine 371, and lysine 392 together coordinate (2R)-2-phosphoglycerate. Lysine 341 functions as the Proton acceptor in the catalytic mechanism.

Belongs to the enolase family. As to quaternary structure, component of the RNA degradosome, a multiprotein complex involved in RNA processing and mRNA degradation. The cofactor is Mg(2+).

Its subcellular location is the cytoplasm. The protein localises to the secreted. The protein resides in the cell surface. It catalyses the reaction (2R)-2-phosphoglycerate = phosphoenolpyruvate + H2O. It participates in carbohydrate degradation; glycolysis; pyruvate from D-glyceraldehyde 3-phosphate: step 4/5. In terms of biological role, catalyzes the reversible conversion of 2-phosphoglycerate (2-PG) into phosphoenolpyruvate (PEP). It is essential for the degradation of carbohydrates via glycolysis. The sequence is that of Enolase from Idiomarina loihiensis (strain ATCC BAA-735 / DSM 15497 / L2-TR).